Consider the following 473-residue polypeptide: 7-dehydrocholesterol reductase (473 aa).

Positions 1–20 (MGERRRANASRGDKKVANGE) are disordered. A run of 6 helical transmembrane segments spans residues 36 to 56 (FSLA…YYFV), 97 to 117 (IYLA…DILH), 175 to 195 (WIPL…FALV), 264 to 284 (VTNS…DFFW), 304 to 324 (LGWG…LYLV), and 329 to 349 (ELST…YYIF). Residues Lys356, Arg360, Met393, Trp398, and 405–406 (NY) contribute to the NADP(+) site. The chain crosses the membrane as a helical span at residues 419–439 (ACGFDHLLPYFYFIYMTILLV). Residues Asp445, 449–453 (CSSKY), and Tyr460 contribute to the NADP(+) site.

Belongs to the ERG4/ERG24 family.

It localises to the endoplasmic reticulum membrane. It carries out the reaction cholesterol + NADP(+) = 7-dehydrocholesterol + NADPH + H(+). It catalyses the reaction 7-dehydrodesmosterol + NADPH + H(+) = desmosterol + NADP(+). Its pathway is steroid biosynthesis; cholesterol biosynthesis. Functionally, catalyzes the last step of the cholesterol synthesis pathway, which transforms cholesta-5,7-dien-3beta-ol (7-dehydrocholesterol,7-DHC) into cholesterol by reducing the C7-C8 double bond of its sterol core. Can also metabolize cholesta-5,7,24-trien-3beta-ol (7-dehydrodemosterol, 7-DHD) to desmosterol, which is then metabolized by the Delta(24)-sterol reductase (DHCR24) to cholesterol. Modulates ferroptosis (a form of regulated cell death driven by iron-dependent lipid peroxidation) through the metabolic breakdown of the anti-ferroptotic metabolites 7-DHC and 7-DHD which, when accumulated, divert the propagation of peroxyl radical-mediated damage from phospholipid components to its sterol core, protecting plasma and mitochondrial membranes from phospholipid autoxidation. The protein is 7-dehydrocholesterol reductase (dhcr7) of Xenopus laevis (African clawed frog).